Reading from the N-terminus, the 640-residue chain is Probable potassium transport system protein Kup 1 (640 aa).

Helical transmembrane passes span L24–L44, I67–V87, V116–I136, P154–I174, F186–V206, T222–V242, W264–L284, M296–I316, I354–F374, A382–V402, L411–A431, and V436–T456.

Belongs to the HAK/KUP transporter (TC 2.A.72) family.

It localises to the cell inner membrane. The enzyme catalyses K(+)(in) + H(+)(in) = K(+)(out) + H(+)(out). Functionally, transport of potassium into the cell. Likely operates as a K(+):H(+) symporter. The protein is Probable potassium transport system protein Kup 1 of Paramagnetospirillum magneticum (strain ATCC 700264 / AMB-1) (Magnetospirillum magneticum).